A 20-amino-acid chain; its full sequence is Cytochrome c oxidase subunit 7B-heart, mitochondrial (20 aa).

The protein belongs to the cytochrome c oxidase VIIb family. In terms of assembly, component of the cytochrome c oxidase (complex IV, CIV), a multisubunit enzyme composed of 14 subunits. The complex is composed of a catalytic core of 3 subunits MT-CO1, MT-CO2 and MT-CO3, encoded in the mitochondrial DNA, and 11 supernumerary subunits COX4I, COX5A, COX5B, COX6A, COX6B, COX6C, COX7A, COX7B, COX7C, COX8 and NDUFA4, which are encoded in the nuclear genome. The complex exists as a monomer or a dimer and forms supercomplexes (SCs) in the inner mitochondrial membrane with NADH-ubiquinone oxidoreductase (complex I, CI) and ubiquinol-cytochrome c oxidoreductase (cytochrome b-c1 complex, complex III, CIII), resulting in different assemblies (supercomplex SCI(1)III(2)IV(1) and megacomplex MCI(2)III(2)IV(2)).

It localises to the mitochondrion inner membrane. It carries out the reaction 4 Fe(II)-[cytochrome c] + O2 + 8 H(+)(in) = 4 Fe(III)-[cytochrome c] + 2 H2O + 4 H(+)(out). It participates in energy metabolism; oxidative phosphorylation. Its function is as follows. Component of the cytochrome c oxidase, the last enzyme in the mitochondrial electron transport chain which drives oxidative phosphorylation. The respiratory chain contains 3 multisubunit complexes succinate dehydrogenase (complex II, CII), ubiquinol-cytochrome c oxidoreductase (cytochrome b-c1 complex, complex III, CIII) and cytochrome c oxidase (complex IV, CIV), that cooperate to transfer electrons derived from NADH and succinate to molecular oxygen, creating an electrochemical gradient over the inner membrane that drives transmembrane transport and the ATP synthase. Cytochrome c oxidase is the component of the respiratory chain that catalyzes the reduction of oxygen to water. Electrons originating from reduced cytochrome c in the intermembrane space (IMS) are transferred via the dinuclear copper A center (CU(A)) of subunit 2 and heme A of subunit 1 to the active site in subunit 1, a binuclear center (BNC) formed by heme A3 and copper B (CU(B)). The BNC reduces molecular oxygen to 2 water molecules using 4 electrons from cytochrome c in the IMS and 4 protons from the mitochondrial matrix. The sequence is that of Cytochrome c oxidase subunit 7B-heart, mitochondrial from Thunnus obesus (Bigeye tuna).